A 201-amino-acid polypeptide reads, in one-letter code: MFSIRKIITISDYVTMLNIITGLLAILLNSFSLIYLSIIFDSLDGYVARKTGTVSDFGAELDSISDVVSFGVAPAYLLYNNFESNLALISAIIFCLCGALRLARFGILNVKGFIGLPIPAGALLLVGFCQLINSYLINSILAILIGLLMISDIKYPKYPNKIFIYIFAVSLCLAIVGIPHFALMLCLIYAIYGIIKYIRGD.

The next 6 helical transmembrane spans lie at 19-39 (IITG…LSII), 57-77 (FGAE…PAYL), 88-108 (LISA…FGIL), 112-132 (GFIG…CQLI), 133-153 (NSYL…ISDI), and 162-182 (IFIY…PHFA).

The protein belongs to the CDP-alcohol phosphatidyltransferase class-I family.

The protein localises to the cell membrane. The enzyme catalyses a CDP-1,2-diacyl-sn-glycerol + L-serine = a 1,2-diacyl-sn-glycero-3-phospho-L-serine + CMP + H(+). This chain is CDP-diacylglycerol--serine O-phosphatidyltransferase (pssA), found in Methanocaldococcus jannaschii (strain ATCC 43067 / DSM 2661 / JAL-1 / JCM 10045 / NBRC 100440) (Methanococcus jannaschii).